Here is a 1859-residue protein sequence, read N- to C-terminus: Protein TIC 214 (1859 aa).

6 consecutive transmembrane segments (helical) span residues 18 to 38 (IINS…FSIG), 64 to 84 (FITG…HLAL), 87 to 107 (PHTI…WNNH), 124 to 144 (LSIQ…HFIL), 172 to 192 (VGWL…LFWI), and 221 to 241 (IFSI…PAPI). The interval 247-314 (KETSKTEERG…TEEIRVNGKE (68 aa)) is disordered. Acidic residues predominate over residues 256–268 (GESEEERDVEIET). Residues 273–284 (KGTKQEQERSTE) are compositionally biased toward basic and acidic residues. The segment covering 295–306 (EKEDPDKIDETE) has biased composition (acidic residues).

This sequence belongs to the TIC214 family. In terms of assembly, part of the Tic complex.

The protein localises to the plastid. It localises to the chloroplast inner membrane. Involved in protein precursor import into chloroplasts. May be part of an intermediate translocation complex acting as a protein-conducting channel at the inner envelope. This Buxus microphylla (Littleleaf boxwood) protein is Protein TIC 214.